We begin with the raw amino-acid sequence, 761 residues long: 5-methyltetrahydropteroyltriglutamate--homocysteine methyltransferase (761 aa).

Residues 16–19 (RELK) and Lys118 each bind 5-methyltetrahydropteroyltri-L-glutamate. L-homocysteine contacts are provided by residues 436-438 (IGS) and Glu489. Residues 436 to 438 (IGS) and Glu489 contribute to the L-methionine site. Residues 520–521 (RC) and Trp566 each bind 5-methyltetrahydropteroyltri-L-glutamate. Asp604 is a binding site for L-homocysteine. Position 604 (Asp604) interacts with L-methionine. Glu610 contacts 5-methyltetrahydropteroyltri-L-glutamate. Positions 646, 648, and 670 each coordinate Zn(2+). The active-site Proton donor is the His699. Cys731 serves as a coordination point for Zn(2+).

It belongs to the vitamin-B12 independent methionine synthase family. Zn(2+) serves as cofactor.

It catalyses the reaction 5-methyltetrahydropteroyltri-L-glutamate + L-homocysteine = tetrahydropteroyltri-L-glutamate + L-methionine. It participates in amino-acid biosynthesis; L-methionine biosynthesis via de novo pathway; L-methionine from L-homocysteine (MetE route): step 1/1. Catalyzes the transfer of a methyl group from 5-methyltetrahydrofolate to homocysteine resulting in methionine formation. In Vibrio cholerae serotype O1 (strain ATCC 39315 / El Tor Inaba N16961), this protein is 5-methyltetrahydropteroyltriglutamate--homocysteine methyltransferase.